The chain runs to 583 residues: Putative rhophilin-2-like protein RHPN2P1 (583 aa).

Residues 26 to 375 enclose the BRO1 domain; it reads PLIPLGLKET…RLTYAQHQED (350 aa). The region spanning 412–490 is the PDZ domain; the sequence is RSNRFTAEEG…DEIEMKVVSL (79 aa).

The polypeptide is Putative rhophilin-2-like protein RHPN2P1 (RHPN2P1) (Homo sapiens (Human)).